The sequence spans 487 residues: Probable UDP-N-acetylglucosamine pyrophosphorylase (487 aa).

A Substrate binding motif is present at residues 105–108; that stretch reads LAGG. UTP contacts are provided by residues 105–108, lysine 119, glutamine 198, and glycine 225; that span reads LAGG. Asparagine 226 contributes to the substrate binding site. Position 256 (aspartate 256) interacts with UTP. Residues 307-308 carry the Substrate binding motif; sequence EY. UTP is bound at residue lysine 382. Lysine 412 serves as a coordination point for substrate.

Belongs to the UDPGP type 1 family.

It is found in the cytoplasm. It catalyses the reaction N-acetyl-alpha-D-glucosamine 1-phosphate + UTP + H(+) = UDP-N-acetyl-alpha-D-glucosamine + diphosphate. Its pathway is nucleotide-sugar biosynthesis; UDP-N-acetyl-alpha-D-glucosamine biosynthesis; UDP-N-acetyl-alpha-D-glucosamine from N-acetyl-alpha-D-glucosamine 1-phosphate: step 1/1. This chain is Probable UDP-N-acetylglucosamine pyrophosphorylase (uap1), found in Dictyostelium discoideum (Social amoeba).